Here is a 656-residue protein sequence, read N- to C-terminus: Leucine-rich repeat-containing protein 43 (656 aa).

Residues 1-13 (MEASYESESESES) are compositionally biased toward acidic residues. The interval 1-25 (MEASYESESESESEAGPGTQRPGTG) is disordered. LRR repeat units follow at residues 150–170 (KLEE…TNLP), 172–193 (TLKV…CAHP), 196–215 (GLQH…ESLY), and 223–244 (NLVS…VTSL). The region spanning 258–296 (NPLALVPYYRGLTIDSLAQLCVLDDITVSPNEKHLFRGL) is the LRRCT domain. A disordered region spans residues 512–554 (LSAKKGKGEKDKKGKEKDRTGKGEKEPAKEWKVLKKKKEPPKE). Residues 517 to 544 (GKGEKDKKGKEKDRTGKGEKEPAKEWKV) show a composition bias toward basic and acidic residues.

This is Leucine-rich repeat-containing protein 43 (LRRC43) from Homo sapiens (Human).